Here is a 269-residue protein sequence, read N- to C-terminus: Short-chain dehydrogenase/reductase ABA4 (269 aa).

NADP(+)-binding residues include Ile34, Asp80, Arg144, Tyr174, Lys178, Ile207, and Thr209. Catalysis depends on Tyr174, which acts as the Proton donor. Residue Lys178 is the Lowers pKa of active site Tyr of the active site.

The protein belongs to the short-chain dehydrogenases/reductases (SDR) family.

The protein operates within hormone biosynthesis. In terms of biological role, short-chain dehydrogenase/reductase involved in the biosynthesis of abscisic acid (ABA), a phytohormone that acts antagonistically toward salicylic acid (SA), jasmonic acid (JA) and ethylene (ETH) signaling, to impede plant defense responses. During pathogen-host interaction, ABA plays a dual role in disease severity by increasing plant susceptibility and accelerating pathogenesis in the fungus itself. The first step of the pathway catalyzes the reaction from farnesyl diphosphate to alpha-ionylideneethane performed by the alpha-ionylideneethane synthase ABA3 via a three-step reaction mechanism involving 2 neutral intermediates, beta-farnesene and allofarnesene. The cytochrome P450 monooxygenase ABA1 might then be involved in the conversion of alpha-ionylideneethane to alpha-ionylideneacetic acid. Alpha-ionylideneacetic acid is further converted to abscisic acid in 2 steps involving the cytochrome P450 monooxygenase ABA2 and the short-chain dehydrogenase/reductase ABA4, via the intermediates 1'-deoxy-ABA or 1',4'-trans-diol-ABA, depending on the order of action of these 2 enzymes. ABA2 is responsible for the hydroxylation of carbon atom C-1' and ABA4 might be involved in the oxidation of the C-4' carbon atom. In Pyricularia oryzae (strain Y34) (Rice blast fungus), this protein is Short-chain dehydrogenase/reductase ABA4 (ABA4).